Reading from the N-terminus, the 281-residue chain is Glyceraldehyde dehydrogenase medium chain (281 aa).

Residues 1–176 (MYPPEFSYVR…TQIEVPVLDG (176 aa)) enclose the FAD-binding PCMH-type domain. Residues 31–35 (AGGQS) and 110–114 (TIGGA) contribute to the FAD site.

In terms of assembly, heterotrimer composed of a large chain (CutA), a medium chain (CutB) and a small chain (CutC). FAD serves as cofactor.

It localises to the cytoplasm. The enzyme catalyses D-glyceraldehyde + A + H2O = (R)-glycerate + AH2 + H(+). Its function is as follows. Component of the glyceraldehyde dehydrogenase which is involved the nonphosphorylated Entner-Doudoroff pathway. Catalyzes the oxidation of D-glyceraldehyde to yield glycerate. When the artificial electron acceptor 2,6-dichlorophenol-indophenol (Cl2Ind) is used, the enzyme shows a broad substrate range (glyceraldehyde-3-phosphate, formaldehyde, acetaldehyde, propionaldehyde and isobutyraldehyde), but is most active with D-glyceraldehyde. It is not known which acceptor is utilized in vivo. The sequence is that of Glyceraldehyde dehydrogenase medium chain (cutB) from Sulfolobus acidocaldarius (strain ATCC 33909 / DSM 639 / JCM 8929 / NBRC 15157 / NCIMB 11770).